The following is a 432-amino-acid chain: Septin-11 (432 aa).

Position 2 is an N-acetylalanine (Ala-2). Phosphoserine is present on Ser-9. Residues 38-304 form the Septin-type G domain; sequence QGFCFNILCV…ELYRRCKLEE (267 aa). The segment at 48 to 55 is G1 motif; that stretch reads GETGIGKS. Residues 48-55, Gly-103, 184-192, Gly-238, and Arg-253 each bind GTP; these read GETGIGKS and KADTIAKNE. Residues 100–103 form a G3 motif region; sequence DTVG. A G4 motif region spans residues 183 to 186; it reads AKAD. A coiled-coil region spans residues 320–413; it reads QETYEAKRNE…LLQSQAQQSG (94 aa). Over residues 403–416 the composition is skewed to low complexity; it reads QLLQSQAQQSGAQQ. The disordered stretch occupies residues 403–432; it reads QLLQSQAQQSGAQQTKKDKDKKNSPWLCTE.

It belongs to the TRAFAC class TrmE-Era-EngA-EngB-Septin-like GTPase superfamily. Septin GTPase family. Septins polymerize into heterooligomeric protein complexes that form filaments, and can associate with cellular membranes, actin filaments and microtubules. Forms homooligomers. GTPase activity is required for filament formation. Interacts with SEPTIN7, SEPTIN9 and SEPTIN12.

The protein resides in the cytoplasm. It localises to the cytoskeleton. It is found in the synapse. The protein localises to the cell projection. Its subcellular location is the dendritic spine. The protein resides in the axon. In terms of biological role, filament-forming cytoskeletal GTPase. May play a role in cytokinesis (Potential). May play a role in the cytoarchitecture of neurons, including dendritic arborization and dendritic spines, and in GABAergic synaptic connectivity. This chain is Septin-11, found in Macaca fascicularis (Crab-eating macaque).